Reading from the N-terminus, the 422-residue chain is Testin (422 aa).

A PET domain is found at 92 to 199 (MILTNPVPAK…GDVKLPGELE (108 aa)). Residues 198 to 224 (LETKATDKNNVNSGDRSTSAAVGAMED) form a disordered region. The span at 205–217 (KNNVNSGDRSTSA) shows a compositional bias: polar residues. LIM zinc-binding domains lie at 234–297 (YSCY…CDSE), 299–359 (PRCA…KHAA), and 362–422 (QGCH…KMMS).

This sequence belongs to the prickle / espinas / testin family.

It localises to the cytoplasm. The protein resides in the cell junction. Its subcellular location is the focal adhesion. Scaffold protein that may play a role in cell adhesion, cell spreading and in the reorganization of the actin cytoskeleton. May play a role in the regulation of cell proliferation. May inhibit cell growth. This Gallus gallus (Chicken) protein is Testin (TES).